A 307-amino-acid polypeptide reads, in one-letter code: Acetaldehyde dehydrogenase (307 aa).

Cysteine 131 functions as the Acyl-thioester intermediate in the catalytic mechanism. NAD(+) contacts are provided by residues 162-170 (SIGPGTRKN) and asparagine 273.

This sequence belongs to the acetaldehyde dehydrogenase family.

The enzyme catalyses acetaldehyde + NAD(+) + CoA = acetyl-CoA + NADH + H(+). The chain is Acetaldehyde dehydrogenase (nahO) from Stutzerimonas stutzeri (Pseudomonas stutzeri).